The sequence spans 319 residues: Lipoyl synthase (319 aa).

The interval 1–32 is disordered; sequence MVVLVDTVSSTPVRPRHPEKAARPDSLSPKKP. Basic and acidic residues predominate over residues 16–32; sequence RHPEKAARPDSLSPKKP. Residues Cys-61, Cys-66, Cys-72, Cys-87, Cys-91, Cys-94, and Ser-300 each contribute to the [4Fe-4S] cluster site. In terms of domain architecture, Radical SAM core spans 73–289; the sequence is WDKKHATFMI…GKTAYAKGFL (217 aa).

The protein belongs to the radical SAM superfamily. Lipoyl synthase family. [4Fe-4S] cluster serves as cofactor.

The protein localises to the cytoplasm. It catalyses the reaction [[Fe-S] cluster scaffold protein carrying a second [4Fe-4S](2+) cluster] + N(6)-octanoyl-L-lysyl-[protein] + 2 oxidized [2Fe-2S]-[ferredoxin] + 2 S-adenosyl-L-methionine + 4 H(+) = [[Fe-S] cluster scaffold protein] + N(6)-[(R)-dihydrolipoyl]-L-lysyl-[protein] + 4 Fe(3+) + 2 hydrogen sulfide + 2 5'-deoxyadenosine + 2 L-methionine + 2 reduced [2Fe-2S]-[ferredoxin]. The protein operates within protein modification; protein lipoylation via endogenous pathway; protein N(6)-(lipoyl)lysine from octanoyl-[acyl-carrier-protein]: step 2/2. Catalyzes the radical-mediated insertion of two sulfur atoms into the C-6 and C-8 positions of the octanoyl moiety bound to the lipoyl domains of lipoate-dependent enzymes, thereby converting the octanoylated domains into lipoylated derivatives. This chain is Lipoyl synthase, found in Rhodopseudomonas palustris (strain BisB5).